We begin with the raw amino-acid sequence, 375 residues long: Queuine tRNA-ribosyltransferase (375 aa).

Asp90 functions as the Proton acceptor in the catalytic mechanism. Substrate-binding positions include 90–94, Asp144, Gln193, and Gly220; that span reads DSGGF. Positions 251–257 are RNA binding; that stretch reads GVGTPED. Residue Asp270 is the Nucleophile of the active site. The tract at residues 275 to 279 is RNA binding; important for wobble base 34 recognition; that stretch reads TRNAR. The Zn(2+) site is built by Cys308, Cys310, Cys313, and His339.

Belongs to the queuine tRNA-ribosyltransferase family. In terms of assembly, homodimer. Within each dimer, one monomer is responsible for RNA recognition and catalysis, while the other monomer binds to the replacement base PreQ1. Requires Zn(2+) as cofactor.

The enzyme catalyses 7-aminomethyl-7-carbaguanine + guanosine(34) in tRNA = 7-aminomethyl-7-carbaguanosine(34) in tRNA + guanine. It participates in tRNA modification; tRNA-queuosine biosynthesis. Functionally, catalyzes the base-exchange of a guanine (G) residue with the queuine precursor 7-aminomethyl-7-deazaguanine (PreQ1) at position 34 (anticodon wobble position) in tRNAs with GU(N) anticodons (tRNA-Asp, -Asn, -His and -Tyr). Catalysis occurs through a double-displacement mechanism. The nucleophile active site attacks the C1' of nucleotide 34 to detach the guanine base from the RNA, forming a covalent enzyme-RNA intermediate. The proton acceptor active site deprotonates the incoming PreQ1, allowing a nucleophilic attack on the C1' of the ribose to form the product. After dissociation, two additional enzymatic reactions on the tRNA convert PreQ1 to queuine (Q), resulting in the hypermodified nucleoside queuosine (7-(((4,5-cis-dihydroxy-2-cyclopenten-1-yl)amino)methyl)-7-deazaguanosine). The polypeptide is Queuine tRNA-ribosyltransferase (Methylibium petroleiphilum (strain ATCC BAA-1232 / LMG 22953 / PM1)).